We begin with the raw amino-acid sequence, 289 residues long: Sphingomyelinase D (289 aa).

Positions 1–22 (MQSISVLICVLLALSILNFTVA) are cleaved as a signal peptide. H34 is a catalytic residue. Mg(2+) contacts are provided by E54, D56, and D103. Residues 282 to 289 (ATEDDAPW) carry the SMD-tail motif.

This sequence belongs to the sphingomyelinase D/phospholipase D family. Requires Mg(2+) as cofactor.

The protein localises to the secreted. It catalyses the reaction a sphingomyelin + H2O = an N-acylsphing-4-enine 1-phosphate + choline + H(+). With respect to regulation, sphingomyelinase activity is reduced by 33 percent following addition of EDTA. In terms of biological role, catalyzes the hydrolysis of sphingomyelin. Sphingomyelinases D are produced by some spider in their venoms, but also by arthropods such as ticks, or pathogenic bacteria and fungi. They might play a role in pathogenicity through different mechanisms, such as membrane destabilization and host cell penetration, but also pulmonary inflammation and cutaneous lesions. The sequence is that of Sphingomyelinase D from Aspergillus flavus (strain ATCC 200026 / FGSC A1120 / IAM 13836 / NRRL 3357 / JCM 12722 / SRRC 167).